A 189-amino-acid chain; its full sequence is Glycerol-3-phosphate acyltransferase (189 aa).

The next 4 helical transmembrane spans lie at 1–21 (MVWLLAILAYLLGSLSFAILL), 79–99 (QQAWIGLAAVSGHLYPLYFNF), 113–133 (LGLYPPAVLPAVAAWLLVFAF), and 151–171 (LLAWRQPEALLPMLLLYGVIV).

Belongs to the PlsY family. In terms of assembly, probably interacts with PlsX.

The protein localises to the cell inner membrane. The enzyme catalyses an acyl phosphate + sn-glycerol 3-phosphate = a 1-acyl-sn-glycero-3-phosphate + phosphate. It participates in lipid metabolism; phospholipid metabolism. In terms of biological role, catalyzes the transfer of an acyl group from acyl-phosphate (acyl-PO(4)) to glycerol-3-phosphate (G3P) to form lysophosphatidic acid (LPA). This enzyme utilizes acyl-phosphate as fatty acyl donor, but not acyl-CoA or acyl-ACP. The polypeptide is Glycerol-3-phosphate acyltransferase (Azotobacter vinelandii (strain DJ / ATCC BAA-1303)).